We begin with the raw amino-acid sequence, 373 residues long: MPDITLILLGAGNSTRFESDVKKQWLYSGEIPLWLHVAESFEAMGAFAKIVIVSSPEDIGLMKHFADYTYVQGGETRQASLKNALEDVTTEYVLVSDIARCCVPAAMIHRILDAREEASCIVPVLPVTDTLYLAQTPLDREQVRIIQTPQLSVTKTLKQALQTDQLFTDDSSAVASMGKKVHFVEGSHEAHKLTTISDLKKLPCIEAPSGKTLTGFGLDIHPFEEGKAMVLCGVKIAVDYGFKAHSDGDVAIHALIDALLGAAGMGDIGELYPDTDQSYAGANSTRLLSDTVRKIRTHGYTIGNVDMTILAQAPRLLPYKEKMKHSIASLLEIRPHLVNIKATTAEKLGFVGRKEGVTVHAVANLTYYNWKQK.

Positions 1–212 (MPDITLILLG…PCIEAPSGKT (212 aa)) are 2-C-methyl-D-erythritol 4-phosphate cytidylyltransferase. The interval 213-373 (LTGFGLDIHP…NLTYYNWKQK (161 aa)) is 2-C-methyl-D-erythritol 2,4-cyclodiphosphate synthase. The a divalent metal cation site is built by D219 and H221. 4-CDP-2-C-methyl-D-erythritol 2-phosphate-binding positions include 219–221 (DIH) and 245–246 (HS). Residue H253 coordinates a divalent metal cation. Residues 267–269 (DIG), 272–276 (YPDTD), 343–346 (TTAE), F350, and R353 contribute to the 4-CDP-2-C-methyl-D-erythritol 2-phosphate site.

It in the N-terminal section; belongs to the IspD/TarI cytidylyltransferase family. IspD subfamily. The protein in the C-terminal section; belongs to the IspF family. A divalent metal cation serves as cofactor.

It catalyses the reaction 2-C-methyl-D-erythritol 4-phosphate + CTP + H(+) = 4-CDP-2-C-methyl-D-erythritol + diphosphate. It carries out the reaction 4-CDP-2-C-methyl-D-erythritol 2-phosphate = 2-C-methyl-D-erythritol 2,4-cyclic diphosphate + CMP. It participates in isoprenoid biosynthesis; isopentenyl diphosphate biosynthesis via DXP pathway; isopentenyl diphosphate from 1-deoxy-D-xylulose 5-phosphate: step 2/6. It functions in the pathway isoprenoid biosynthesis; isopentenyl diphosphate biosynthesis via DXP pathway; isopentenyl diphosphate from 1-deoxy-D-xylulose 5-phosphate: step 4/6. In terms of biological role, bifunctional enzyme that catalyzes the formation of 4-diphosphocytidyl-2-C-methyl-D-erythritol from CTP and 2-C-methyl-D-erythritol 4-phosphate (MEP) (IspD), and catalyzes the conversion of 4-diphosphocytidyl-2-C-methyl-D-erythritol 2-phosphate (CDP-ME2P) to 2-C-methyl-D-erythritol 2,4-cyclodiphosphate (ME-CPP) with a corresponding release of cytidine 5-monophosphate (CMP) (IspF). In Sulfurovum sp. (strain NBC37-1), this protein is Bifunctional enzyme IspD/IspF.